A 461-amino-acid chain; its full sequence is Bifunctional protein GlmU (461 aa).

The pyrophosphorylase stretch occupies residues 1–230; it reads MSKIHAVVLA…PEETLGVNDR (230 aa). UDP-N-acetyl-alpha-D-glucosamine is bound by residues 9–12, K23, Q73, 78–79, 101–103, G140, E155, N170, and N228; these read LAAG, GT, and YGD. D103 contributes to the Mg(2+) binding site. N228 contributes to the Mg(2+) binding site. The tract at residues 231–251 is linker; it reads VQLSEAEAYMKKRIMTGHMRN. The segment at 252–461 is N-acetyltransferase; that stretch reads GVTIIDPTST…KMPRKGKKQS (210 aa). R333 and K351 together coordinate UDP-N-acetyl-alpha-D-glucosamine. The active-site Proton acceptor is the H363. UDP-N-acetyl-alpha-D-glucosamine contacts are provided by Y366 and N377. Residues 386-387, A423, and R440 contribute to the acetyl-CoA site; that span reads NY.

The protein in the N-terminal section; belongs to the N-acetylglucosamine-1-phosphate uridyltransferase family. In the C-terminal section; belongs to the transferase hexapeptide repeat family. Homotrimer. Mg(2+) is required as a cofactor.

The protein localises to the cytoplasm. It carries out the reaction alpha-D-glucosamine 1-phosphate + acetyl-CoA = N-acetyl-alpha-D-glucosamine 1-phosphate + CoA + H(+). It catalyses the reaction N-acetyl-alpha-D-glucosamine 1-phosphate + UTP + H(+) = UDP-N-acetyl-alpha-D-glucosamine + diphosphate. Its pathway is nucleotide-sugar biosynthesis; UDP-N-acetyl-alpha-D-glucosamine biosynthesis; N-acetyl-alpha-D-glucosamine 1-phosphate from alpha-D-glucosamine 6-phosphate (route II): step 2/2. The protein operates within nucleotide-sugar biosynthesis; UDP-N-acetyl-alpha-D-glucosamine biosynthesis; UDP-N-acetyl-alpha-D-glucosamine from N-acetyl-alpha-D-glucosamine 1-phosphate: step 1/1. It functions in the pathway bacterial outer membrane biogenesis; LPS lipid A biosynthesis. Functionally, catalyzes the last two sequential reactions in the de novo biosynthetic pathway for UDP-N-acetylglucosamine (UDP-GlcNAc). The C-terminal domain catalyzes the transfer of acetyl group from acetyl coenzyme A to glucosamine-1-phosphate (GlcN-1-P) to produce N-acetylglucosamine-1-phosphate (GlcNAc-1-P), which is converted into UDP-GlcNAc by the transfer of uridine 5-monophosphate (from uridine 5-triphosphate), a reaction catalyzed by the N-terminal domain. The protein is Bifunctional protein GlmU of Brevibacillus brevis (strain 47 / JCM 6285 / NBRC 100599).